We begin with the raw amino-acid sequence, 296 residues long: Probable AP endonuclease (296 aa).

C16 and C20 are oxidised to a cystine. The Zn(2+) site is built by H78, H115, E142, H182, H218, D231, H233, and E271.

The protein belongs to the AP endonuclease 2 family. Zn(2+) serves as cofactor.

Its subcellular location is the host nucleus. It localises to the host cytoplasm. The protein resides in the virion. In terms of biological role, endonuclease of the viral base excision repair system that catalyzes DNA cleavage reaction at the apurinic or apyrimidinic sites (AP sites). Cleaves phosphodiester bonds on the 5' side of AP sites. In addition to endonuclease activity, the AP endonuclease has a proofreading 3'-5' exonuclease activity that is considerably more efficient in the elimination of a mismatch than in that of a correctly paired base. Displays 3'-phosphatase and 3'-repair diesterase activities. The single nucleotide gaps generated by the AP endonuclease are filled by the viral repair DNA polymerase X and the DNA ligase. The chain is Probable AP endonuclease from Ornithodoros (relapsing fever ticks).